The following is a 325-amino-acid chain: MSQPPEHPGNPADPQGGNQGAGSYPPPGYGAPPPPPGYGXPPGTYLPPGYNAPPPPPGYGPPPGPPPPGYPTHLQSSGFSVGDAISWSWNRFTQNAVTLVVPVLAYAVALAAVIGATAGLVVALSDRATTAYTNTSGVSSESVDITMTPAAGIVMFLGYIALFALVLYMHAGILTGCLDIADGKPVTIATFFRPRNLGLVLVTGLLIVALTFIGGLLCVIPGLIFGFVAQFAVAFAVDRSTSPIDSVKASIETVGSNIGGSVLSWLAQLTAVLVGELLCFVGMLIGIPVAALIHVYTYRKLSGGQVVEAVRPAPPVGWPPGPQLA.

A disordered region spans residues M1–Q75. 2 stretches are compositionally biased toward pro residues: residues Y24–G39 and Y50–Y70. Helical transmembrane passes span A96–A116, I153–I173, L205–F225, and L273–I293.

The protein localises to the cell membrane. This is an uncharacterized protein from Mycobacterium tuberculosis (strain CDC 1551 / Oshkosh).